Reading from the N-terminus, the 137-residue chain is MKKLIYIIVGIAGILGALSRYYLGLTIHEFWHHTFPLATLLINLAGCFLLAWLTTYIAKRNLLPSDVITGIGTGFIGSFTTFSTFSVETVQLINYSEWSIAFLYVSCSILGGLIMSGLGYTLGDFLLKKHLTEGDHL.

A run of 4 helical transmembrane segments spans residues 4–24 (LIYI…YYLG), 37–57 (LATL…TTYI), 67–87 (VITG…TFSV), and 100–120 (IAFL…GLGY). Residues Gly77 and Thr80 each coordinate Na(+).

The protein belongs to the fluoride channel Fluc/FEX (TC 1.A.43) family.

It localises to the cell membrane. It carries out the reaction fluoride(in) = fluoride(out). With respect to regulation, na(+) is not transported, but it plays an essential structural role and its presence is essential for fluoride channel function. Functionally, fluoride-specific ion channel. Important for reducing fluoride concentration in the cell, thus reducing its toxicity. This Bacillus thuringiensis subsp. konkukian (strain 97-27) protein is Fluoride-specific ion channel FluC 1.